The sequence spans 210 residues: Ras-related protein Rab-2-B (210 aa).

GTP is bound at residue 13–21 (GDTGVGKSC). Residues 35-43 (HDLTIGVEF) carry the Effector region motif. GTP is bound by residues 61-65 (DTAGQ), 119-122 (NKCD), and 149-151 (SAK). S-geranylgeranyl cysteine attachment occurs at residues cysteine 208 and cysteine 209.

The protein belongs to the small GTPase superfamily. Rab family.

The protein resides in the endoplasmic reticulum membrane. It localises to the golgi apparatus membrane. Protein transport. Probably involved in vesicular traffic. The polypeptide is Ras-related protein Rab-2-B (RAB2B) (Zea mays (Maize)).